Reading from the N-terminus, the 258-residue chain is 4-oxalmesaconate hydratase (258 aa).

Zn(2+) contacts are provided by His28, Asp31, and His141.

This sequence belongs to the MshB deacetylase family. Requires Zn(2+) as cofactor.

It catalyses the reaction 2-hydroxy-4-oxobutane-1,2,4-tricarboxylate = 4-carboxy-2-hydroxy-cis,cis-muconate + H2O. Its function is as follows. Catalyzes the conversion of oxalomesaconic acid enol (OMAenol) to 4-carboxy-4-hydroxy-2-oxoadipic acid (CHA). Mediates the third step of gallate degradation pathway. This is 4-oxalmesaconate hydratase (galB) from Pseudomonas putida (strain ATCC 47054 / DSM 6125 / CFBP 8728 / NCIMB 11950 / KT2440).